Reading from the N-terminus, the 442-residue chain is UDP-N-acetylmuramate--L-alanine ligase (442 aa).

Gly109–Ser115 is an ATP binding site.

This sequence belongs to the MurCDEF family.

The protein resides in the cytoplasm. It catalyses the reaction UDP-N-acetyl-alpha-D-muramate + L-alanine + ATP = UDP-N-acetyl-alpha-D-muramoyl-L-alanine + ADP + phosphate + H(+). It participates in cell wall biogenesis; peptidoglycan biosynthesis. Cell wall formation. This Streptococcus pyogenes serotype M6 (strain ATCC BAA-946 / MGAS10394) protein is UDP-N-acetylmuramate--L-alanine ligase.